Reading from the N-terminus, the 258-residue chain is Proteasome subunit beta type-1 (258 aa).

This sequence belongs to the peptidase T1B family. The 26S proteasome consists of a 20S proteasome core and two 19S regulatory subunits. The 20S proteasome core is composed of 28 subunits that are arranged in four stacked rings, resulting in a barrel-shaped structure. The two end rings are each formed by seven alpha subunits, and the two central rings are each formed by seven beta subunits. The catalytic chamber with the active sites is on the inside of the barrel.

The protein resides in the cytoplasm. It is found in the nucleus. Its function is as follows. Non-catalytic component of the proteasome, a multicatalytic proteinase complex which is characterized by its ability to cleave peptides with Arg, Phe, Tyr, Leu, and Glu adjacent to the leaving group at neutral or slightly basic pH. The proteasome has an ATP-dependent proteolytic activity. In Caenorhabditis elegans, this protein is Proteasome subunit beta type-1 (pbs-6).